We begin with the raw amino-acid sequence, 187 residues long: Threonylcarbamoyl-AMP synthase (187 aa).

The region spanning 4–187 (ILTLDNAVAT…DARSGQILRD (184 aa)) is the YrdC-like domain.

The protein belongs to the SUA5 family. TsaC subfamily.

It localises to the cytoplasm. The catalysed reaction is L-threonine + hydrogencarbonate + ATP = L-threonylcarbamoyladenylate + diphosphate + H2O. Required for the formation of a threonylcarbamoyl group on adenosine at position 37 (t(6)A37) in tRNAs that read codons beginning with adenine. Catalyzes the conversion of L-threonine, HCO(3)(-)/CO(2) and ATP to give threonylcarbamoyl-AMP (TC-AMP) as the acyladenylate intermediate, with the release of diphosphate. This is Threonylcarbamoyl-AMP synthase from Xanthomonas oryzae pv. oryzae (strain MAFF 311018).